The sequence spans 252 residues: Imidazole glycerol phosphate synthase subunit HisF (252 aa).

Catalysis depends on residues D11 and D130.

This sequence belongs to the HisA/HisF family. In terms of assembly, heterodimer of HisH and HisF.

Its subcellular location is the cytoplasm. It carries out the reaction 5-[(5-phospho-1-deoxy-D-ribulos-1-ylimino)methylamino]-1-(5-phospho-beta-D-ribosyl)imidazole-4-carboxamide + L-glutamine = D-erythro-1-(imidazol-4-yl)glycerol 3-phosphate + 5-amino-1-(5-phospho-beta-D-ribosyl)imidazole-4-carboxamide + L-glutamate + H(+). It participates in amino-acid biosynthesis; L-histidine biosynthesis; L-histidine from 5-phospho-alpha-D-ribose 1-diphosphate: step 5/9. Functionally, IGPS catalyzes the conversion of PRFAR and glutamine to IGP, AICAR and glutamate. The HisF subunit catalyzes the cyclization activity that produces IGP and AICAR from PRFAR using the ammonia provided by the HisH subunit. This is Imidazole glycerol phosphate synthase subunit HisF from Polynucleobacter asymbioticus (strain DSM 18221 / CIP 109841 / QLW-P1DMWA-1) (Polynucleobacter necessarius subsp. asymbioticus).